The sequence spans 339 residues: Ureidoglycine carbamoyltransferase (339 aa).

This sequence belongs to the aspartate/ornithine carbamoyltransferase superfamily. In terms of assembly, homodimer.

The catalysed reaction is (S)-2-ureidoglycine + carbamoyl phosphate = allantoate + phosphate + H(+). It participates in purine metabolism. Catalyzes the phosphorolysis of allantoate to ureidoglycine and carbamoyl phosphate. Is likely involved in a purine degradation pathway. The polypeptide is Ureidoglycine carbamoyltransferase (Rubrobacter xylanophilus (strain DSM 9941 / JCM 11954 / NBRC 16129 / PRD-1)).